The sequence spans 388 residues: Succinate--CoA ligase [ADP-forming] subunit beta (388 aa).

Positions 9-244 constitute an ATP-grasp domain; that stretch reads KQLFARYGLP…HSQEDEREAH (236 aa). Residues lysine 46, 53-55, glutamate 99, threonine 102, and glutamate 107 each bind ATP; that span reads GRG. Mg(2+) contacts are provided by asparagine 199 and aspartate 213. Substrate contacts are provided by residues asparagine 264 and 321 to 323; that span reads GIV.

The protein belongs to the succinate/malate CoA ligase beta subunit family. In terms of assembly, heterotetramer of two alpha and two beta subunits. It depends on Mg(2+) as a cofactor.

The catalysed reaction is succinate + ATP + CoA = succinyl-CoA + ADP + phosphate. The enzyme catalyses GTP + succinate + CoA = succinyl-CoA + GDP + phosphate. Its pathway is carbohydrate metabolism; tricarboxylic acid cycle; succinate from succinyl-CoA (ligase route): step 1/1. Succinyl-CoA synthetase functions in the citric acid cycle (TCA), coupling the hydrolysis of succinyl-CoA to the synthesis of either ATP or GTP and thus represents the only step of substrate-level phosphorylation in the TCA. The beta subunit provides nucleotide specificity of the enzyme and binds the substrate succinate, while the binding sites for coenzyme A and phosphate are found in the alpha subunit. In Sodalis glossinidius (strain morsitans), this protein is Succinate--CoA ligase [ADP-forming] subunit beta.